The following is a 603-amino-acid chain: Beta-hexosaminidase (603 aa).

Positions 1 to 19 (MAYFRLYAVLLAVASSVAA) are cleaved as a signal peptide. Residues aspartate 225, histidine 278, and glutamate 349 each act as charge relay system in the active site. A disulfide bridge connects residues cysteine 293 and cysteine 354. Residue asparagine 356 is glycosylated (N-linked (GlcNAc...) asparagine). An intrachain disulfide couples cysteine 451 to cysteine 486. N-linked (GlcNAc...) asparagine glycosylation is found at asparagine 503 and asparagine 528. A disulfide bond links cysteine 586 and cysteine 593.

The protein belongs to the glycosyl hydrolase 20 family. In terms of assembly, homodimer.

It localises to the secreted. It catalyses the reaction Hydrolysis of terminal non-reducing N-acetyl-D-hexosamine residues in N-acetyl-beta-D-hexosaminides.. Part of the binary chitinolytic system. Involved in hydrolysis of chitobiose and higher chito-oligomers (produced from cell wall chitin by endochitinases), thus contributing to the formation of germ tubes, fruit-bodies and septa during hyphenation. Hydrolyzes synthetic substrates p-nitrophenyl-beta-N-acetyl-glucosamine (pNP-beta-GlcNAc), p-nitrophenyl-beta-N-acetyl-galactosamine (pNP-beta-GalNAc) and 5-bromo-4-chloro-3-indoyl-beta-D-N-glucosaminide (X-GlcNAc). This is Beta-hexosaminidase from Emericella nidulans (Aspergillus nidulans).